We begin with the raw amino-acid sequence, 242 residues long: Probable inactive serine protease 58 (242 aa).

The first 17 residues, 1 to 17 (MNLILLWALLNLPVALT), serve as a signal peptide directing secretion. The Peptidase S1 domain occupies 18–240 (FDPNYKDDIT…YIPWIENTIQ (223 aa)). Disulfide bonds link Cys-41–Cys-57, Cys-134–Cys-202, Cys-166–Cys-181, and Cys-192–Cys-216. Residue Asn-157 is glycosylated (N-linked (GlcNAc...) asparagine).

It belongs to the peptidase S1 family.

The protein localises to the secreted. This Bos taurus (Bovine) protein is Probable inactive serine protease 58 (PRSS58).